Reading from the N-terminus, the 312-residue chain is Ribosomal protein L11 methyltransferase (312 aa).

S-adenosyl-L-methionine contacts are provided by Thr-162, Gly-183, Asp-205, and Asn-248.

Belongs to the methyltransferase superfamily. PrmA family.

The protein resides in the cytoplasm. The enzyme catalyses L-lysyl-[protein] + 3 S-adenosyl-L-methionine = N(6),N(6),N(6)-trimethyl-L-lysyl-[protein] + 3 S-adenosyl-L-homocysteine + 3 H(+). Methylates ribosomal protein L11. The sequence is that of Ribosomal protein L11 methyltransferase from Anoxybacillus flavithermus (strain DSM 21510 / WK1).